The chain runs to 500 residues: Na(+)/H(+) antiporter NhaB (500 aa).

12 consecutive transmembrane segments (helical) span residues 28 to 50 (FLLLNPLLLWLAGPVTSAWVLVG), 68 to 88 (GGLLVLEALLLGLATPEALYA), 98 to 118 (LLLMFMVAGIYFMKDLLLLLF), 121 to 141 (LLLGVRSKALLSLLFCLLAAL), 145 to 165 (FLDALTVTAVVISVAVAFFAV), 205 to 225 (LLMHAAVGTALGGVCTLVGEP), 244 to 264 (QVAPVSMPVLAAGLLTCVLLE), 311 to 331 (VLIVGLALHVAEVGLIGLLVI), 350 to 370 (FQEALPFTALLVVFFAVVAVI), 394 to 414 (MLFIANGLLSAISDNVFVATI), 449 to 469 (VATPNGQAAFLFLLTSSIAPL), and 477 to 497 (MVWMALPYTLVMGGLGWWAVS).

It belongs to the NhaB Na(+)/H(+) (TC 2.A.34) antiporter family.

Its subcellular location is the cell inner membrane. The catalysed reaction is 2 Na(+)(in) + 3 H(+)(out) = 2 Na(+)(out) + 3 H(+)(in). In terms of biological role, na(+)/H(+) antiporter that extrudes sodium in exchange for external protons. The polypeptide is Na(+)/H(+) antiporter NhaB (Pseudomonas aeruginosa (strain UCBPP-PA14)).